Consider the following 281-residue polypeptide: NAD kinase (281 aa).

Catalysis depends on aspartate 66, which acts as the Proton acceptor. NAD(+)-binding positions include 66-67 (DG), 137-138 (ND), arginine 148, arginine 165, aspartate 167, and 178-183 (TAYSMS).

This sequence belongs to the NAD kinase family. A divalent metal cation is required as a cofactor.

The protein resides in the cytoplasm. It catalyses the reaction NAD(+) + ATP = ADP + NADP(+) + H(+). In terms of biological role, involved in the regulation of the intracellular balance of NAD and NADP, and is a key enzyme in the biosynthesis of NADP. Catalyzes specifically the phosphorylation on 2'-hydroxyl of the adenosine moiety of NAD to yield NADP. This Chlorobium phaeovibrioides (strain DSM 265 / 1930) (Prosthecochloris vibrioformis (strain DSM 265)) protein is NAD kinase.